Here is a 284-residue protein sequence, read N- to C-terminus: MFKKFKPVTPGTRQLVLPAFDELTTQGELSGKKTRKSVRPNKKLSFFKKSSGGRDNLGHISCRHRGGGAKRLYRVIDFKRNKDGIEAKVVSVEYDPNRSAYIALLSYADGEKRYILAPKGIKRGDQVISGEGSPFKLGCCMTLKSMPLGSTVHNIEMRPHSGGKLVRSAGLAAQVIAKTPGYVTLKMPSGEFRMLNEGCRATIGEVSNSDHNLCVDGKAGRKRWKGIRPTVRGTAMNPVDHPHGGGEGRHNGYIPRTPWGKVTKGLKTRDKRKSNKWIVKDRRK.

Residues 232 to 284 (RGTAMNPVDHPHGGGEGRHNGYIPRTPWGKVTKGLKTRDKRKSNKWIVKDRRK) are disordered. Residues 240–250 (DHPHGGGEGRH) show a composition bias toward basic and acidic residues. The span at 264–284 (KGLKTRDKRKSNKWIVKDRRK) shows a compositional bias: basic residues.

Belongs to the universal ribosomal protein uL2 family. In terms of assembly, part of the 50S ribosomal subunit. Forms a bridge to the 30S subunit in the 70S ribosome.

One of the primary rRNA binding proteins. Required for association of the 30S and 50S subunits to form the 70S ribosome, for tRNA binding and peptide bond formation. It has been suggested to have peptidyltransferase activity; this is somewhat controversial. Makes several contacts with the 16S rRNA in the 70S ribosome. This is Large ribosomal subunit protein uL2 from Chlamydia abortus (strain DSM 27085 / S26/3) (Chlamydophila abortus).